Consider the following 181-residue polypeptide: Mitochondrial inner membrane protein Mpv17 (181 aa).

Transmembrane regions (helical) follow at residues 20–37 (MCIA…AQYL), 51–67 (FSFL…FIWF), 86–103 (LCID…AILF), and 152–169 (VILN…LSYI).

It belongs to the peroxisomal membrane protein PXMP2/4 family.

The protein localises to the mitochondrion inner membrane. Its function is as follows. Involved in mitochondria homeostasis. This is Mitochondrial inner membrane protein Mpv17 from Caenorhabditis elegans.